The sequence spans 797 residues: Outer membrane protein assembly factor BamA (797 aa).

The first 19 residues, methionine 1–alanine 19, serve as a signal peptide directing secretion. POTRA domains are found at residues phenylalanine 22–lysine 89, serine 90–aspartate 170, alanine 173–glycine 259, tyrosine 262–glycine 341, and leucine 344–arginine 418.

The protein belongs to the BamA family. In terms of assembly, part of the Bam complex.

It is found in the cell outer membrane. Its function is as follows. Part of the outer membrane protein assembly complex, which is involved in assembly and insertion of beta-barrel proteins into the outer membrane. In Haemophilus influenzae, this protein is Outer membrane protein assembly factor BamA.